The primary structure comprises 314 residues: Olfactory receptor 1Q1 (314 aa).

Topologically, residues 1 to 25 are extracellular; it reads MDNSNWTSVSHFVLLGISTHPEEQI. N-linked (GlcNAc...) asparagine glycosylation is present at Asn-5. A helical membrane pass occupies residues 26-49; sequence PLFLVFSLMYAINISGNLAIITLI. Over 50–57 the chain is Cytoplasmic; it reads LSAPRLHI. A helical transmembrane segment spans residues 58–79; that stretch reads PMYIFLSNLALTDICFTSTTVP. Residues 80-100 are Extracellular-facing; sequence KMLQIIFSPTKVISYTGCLAQ. A disulfide bond links Cys-97 and Cys-189. A helical transmembrane segment spans residues 101-120; the sequence is TYFFICFAVMENFILAVMAY. The Cytoplasmic segment spans residues 121–139; it reads DRYIAICHPFHYTMILTRM. Residues 140 to 158 traverse the membrane as a helical segment; the sequence is LCVKMVVMCHALSHLHAML. Residues 159–195 are Extracellular-facing; that stretch reads HTFLIGQLIFCADNRIPHFFCDLYALMKISCTSTYLN. Residues 196–219 form a helical membrane-spanning segment; the sequence is TLMIHTEGAVVISGALAFITASYA. The Cytoplasmic segment spans residues 220–236; it reads CIILVVLRIPSAKGRWK. The chain crosses the membrane as a helical span at residues 237–259; it reads TFSTCGSHLTVVAIFYGTLSWVY. Over 260-272 the chain is Extracellular; that stretch reads FRPLSSYSVTKGR. Residues 273-292 form a helical membrane-spanning segment; the sequence is IITVVYTVVTPMLNPFIYSL. Over 293 to 314 the chain is Cytoplasmic; sequence RNGDVKGGFMKWMSRMQTFFFR.

It belongs to the G-protein coupled receptor 1 family.

The protein resides in the cell membrane. Odorant receptor. The polypeptide is Olfactory receptor 1Q1 (OR1Q1) (Homo sapiens (Human)).